Here is a 542-residue protein sequence, read N- to C-terminus: Chaperonin GroEL (542 aa).

ATP contacts are provided by residues 29–32 (TLGP), 86–90 (DGTTT), Gly413, and Asp492.

Belongs to the chaperonin (HSP60) family. As to quaternary structure, forms a cylinder of 14 subunits composed of two heptameric rings stacked back-to-back. Interacts with the co-chaperonin GroES.

Its subcellular location is the cytoplasm. It catalyses the reaction ATP + H2O + a folded polypeptide = ADP + phosphate + an unfolded polypeptide.. Its function is as follows. Together with its co-chaperonin GroES, plays an essential role in assisting protein folding. The GroEL-GroES system forms a nano-cage that allows encapsulation of the non-native substrate proteins and provides a physical environment optimized to promote and accelerate protein folding. This Nocardia asteroides protein is Chaperonin GroEL.